A 369-amino-acid polypeptide reads, in one-letter code: NAD(P)H-quinone oxidoreductase subunit 1, chloroplastic (369 aa).

The next 5 membrane-spanning stretches (helical) occupy residues 25-45, 104-124, 130-150, 270-290, and 306-326; these read FGFI…TIGI, VMVV…HGII, IGVF…LTAG, LSAT…LFLP, and VISI…FLFI.

It belongs to the complex I subunit 1 family. NDH is composed of at least 16 different subunits, 5 of which are encoded in the nucleus.

It is found in the plastid. It localises to the chloroplast thylakoid membrane. The catalysed reaction is a plastoquinone + NADH + (n+1) H(+)(in) = a plastoquinol + NAD(+) + n H(+)(out). It carries out the reaction a plastoquinone + NADPH + (n+1) H(+)(in) = a plastoquinol + NADP(+) + n H(+)(out). In terms of biological role, NDH shuttles electrons from NAD(P)H:plastoquinone, via FMN and iron-sulfur (Fe-S) centers, to quinones in the photosynthetic chain and possibly in a chloroplast respiratory chain. The immediate electron acceptor for the enzyme in this species is believed to be plastoquinone. Couples the redox reaction to proton translocation, and thus conserves the redox energy in a proton gradient. The protein is NAD(P)H-quinone oxidoreductase subunit 1, chloroplastic of Huperzia lucidula (Shining clubmoss).